The following is a 284-amino-acid chain: Tryptophan synthase alpha chain (284 aa).

Residues Glu-55 and Asp-66 each act as proton acceptor in the active site.

The protein belongs to the TrpA family. Tetramer of two alpha and two beta chains.

The catalysed reaction is (1S,2R)-1-C-(indol-3-yl)glycerol 3-phosphate + L-serine = D-glyceraldehyde 3-phosphate + L-tryptophan + H2O. Its pathway is amino-acid biosynthesis; L-tryptophan biosynthesis; L-tryptophan from chorismate: step 5/5. Functionally, the alpha subunit is responsible for the aldol cleavage of indoleglycerol phosphate to indole and glyceraldehyde 3-phosphate. The chain is Tryptophan synthase alpha chain from Methanococcus voltae.